The following is a 241-amino-acid chain: Sugar fermentation stimulation protein homolog (241 aa).

This sequence belongs to the SfsA family.

The sequence is that of Sugar fermentation stimulation protein homolog from Nostoc punctiforme (strain ATCC 29133 / PCC 73102).